The following is a 770-amino-acid chain: Metabotropic glutamate receptor-like protein F (770 aa).

Positions 1 to 22 (MKIKNFIYFLIYFIFLFKVING) are cleaved as a signal peptide. Residues 23-370 (QNKTCKISVL…STVDYPESLK (348 aa)) are Extracellular-facing. N-linked (GlcNAc...) asparagine glycosylation is found at asparagine 24, asparagine 185, asparagine 260, asparagine 286, asparagine 319, and asparagine 344. A helical membrane pass occupies residues 371-391 (IGVTVVSGFCIFLCLISMIIV). At 392 to 405 (IKFKEAKVIKSSSP) the chain is on the cytoplasmic side. The chain crosses the membrane as a helical span at residues 406-426 (IFCLLILFGCIVIFVGCIMFA). The Extracellular segment spans residues 427 to 442 (RSPTDGSCRSRVWLLS). The chain crosses the membrane as a helical span at residues 443-463 (LGYTIFLGNLMVKNWRIWLLF). At 464–483 (DNPKLKKRAITNWKLYPWVS) the chain is on the cytoplasmic side. Residues 484–504 (GIVIIDIVILSIWQALGDIVA) traverse the membrane as a helical segment. Over 505–528 (ESRTGIDSLTKYEYRNVCASSDQG) the chain is Extracellular. A helical transmembrane segment spans residues 529 to 549 (SIALYLLLVFHGLILLVACFI). The Cytoplasmic portion of the chain corresponds to 550–565 (SFKIKVVDIEEFNESK). Residues 566 to 586 (PITTSVYIITFCLFIVIPIMV) form a helical membrane-spanning segment. Residues 587-594 (SSPTVTTQ) lie on the Extracellular side of the membrane. The chain crosses the membrane as a helical span at residues 595–615 (TTIICICALITTMLSIILLFG). Residues 616-770 (TKFFKMITVG…GQTEIDSNDV (155 aa)) lie on the Cytoplasmic side of the membrane. The tract at residues 639 to 740 (SSHSQRTKSS…EEKQKDEEEI (102 aa)) is disordered. Basic and acidic residues-rich tracts occupy residues 676 to 693 (SSEK…KDHM) and 730 to 740 (NEEKQKDEEEI). Residues 715–760 (REQINDNIILENNNDNEEKQKDEEEIKEEKLLVSEIQAKRLSLEQN) adopt a coiled-coil conformation.

It in the N-terminal section; belongs to the BMP lipoprotein family. In the C-terminal section; belongs to the G-protein coupled receptor 3 family. GABA-B receptor subfamily.

The protein localises to the membrane. This chain is Metabotropic glutamate receptor-like protein F (grlF), found in Dictyostelium discoideum (Social amoeba).